Reading from the N-terminus, the 185-residue chain is Ribosome-recycling factor (185 aa).

The protein belongs to the RRF family.

The protein localises to the cytoplasm. Responsible for the release of ribosomes from messenger RNA at the termination of protein biosynthesis. May increase the efficiency of translation by recycling ribosomes from one round of translation to another. The sequence is that of Ribosome-recycling factor from Marinomonas sp. (strain MWYL1).